Consider the following 692-residue polypeptide: uncharacterized protein (692 aa).

Response regulatory domains follow at residues 9 to 130 (RVLY…LRMC) and 139 to 255 (RILI…EYRM). Aspartate 58 and aspartate 188 each carry 4-aspartylphosphate. The 134-residue stretch at 299-432 (GVHGLVIIDV…GGNQAHVWSA (134 aa)) folds into the GGDEF domain. The 249-residue stretch at 443 to 691 (ESVIKRLVST…SFDFQHMSHD (249 aa)) folds into the EAL domain.

This is an uncharacterized protein from Thiocystis violacea.